Reading from the N-terminus, the 179-residue chain is Natural killer cells antigen CD94 (179 aa).

Residues 1–10 (MAVFKTTLWW) are Cytoplasmic-facing. The helical; Signal-anchor for type II membrane protein transmembrane segment at 11–31 (LISGTLGIICLSLTATLGILL) threads the bilayer. The Extracellular segment spans residues 32-179 (KNSFTKLSIE…NRYICKQQLI (148 aa)). 2 disulfides stabilise this stretch: Cys58-Cys70 and Cys61-Cys72. The region spanning 68 to 175 (YRCNCYFISS…CEDKNRYICK (108 aa)) is the C-type lectin domain. Asn83 and Asn132 each carry an N-linked (GlcNAc...) asparagine glycan. Cystine bridges form between Cys89/Cys174 and Cys152/Cys166.

In terms of assembly, can form disulfide-bonded heterodimer with NKG2 family members KLRC1 and KLRC2. KLRD1-KLRC1 heterodimer interacts with peptide-bound MHC-E-B2M heterotrimeric complex. KLRD1 plays a prominent role in directly interacting with MHC-E. KLRD1-KLRC1 interacts with much higher affinity with peptide-bound MHC-E-B2M than KLRD1-KLRC2. Interacts with the adapter protein TYROBP/DAP12; this interaction is required for cell surface expression and cell activation. As to expression, natural killer cells.

The protein localises to the cell membrane. Functionally, immune receptor involved in self-nonself discrimination. In complex with KLRC1 or KLRC2 on cytotoxic and regulatory lymphocyte subsets, recognizes non-classical major histocompatibility (MHC) class Ib molecule MHC-E loaded with self-peptides derived from the signal sequence of classical MHC class Ia and non-classical MHC class Ib molecules. Enables cytotoxic cells to monitor the expression of MHC class I molecules in healthy cells and to tolerate self. Primarily functions as a ligand binding subunit as it lacks the capacity to signal. Its function is as follows. KLRD1-KLRC1 acts as an immune inhibitory receptor. Key inhibitory receptor on natural killer (NK) cells that regulates their activation and effector functions. Dominantly counteracts T cell receptor signaling on a subset of memory/effector CD8-positive T cells as part of an antigen-driven response to avoid autoimmunity. On intraepithelial CD8-positive gamma-delta regulatory T cells triggers TGFB1 secretion, which in turn limits the cytotoxic programming of intraepithelial CD8-positive alpha-beta T cells, distinguishing harmless from pathogenic antigens. In MHC-E-rich tumor microenvironment, acts as an immune inhibitory checkpoint and may contribute to progressive loss of effector functions of NK cells and tumor-specific T cells, a state known as cell exhaustion. Upon MHC-E-peptide binding, transmits intracellular signals through KLRC1 immunoreceptor tyrosine-based inhibition motifs (ITIMs) by recruiting INPP5D/SHIP-1 and INPPL1/SHIP-2 tyrosine phosphatases to ITIMs, and ultimately opposing signals transmitted by activating receptors through dephosphorylation of proximal signaling molecules. In terms of biological role, KLRD1-KLRC2 acts as an immune activating receptor. On cytotoxic lymphocyte subsets recognizes MHC-E loaded with signal sequence-derived peptides from non-classical MHC class Ib MHC-G molecules, likely playing a role in the generation and effector functions of adaptive NK cells and in maternal-fetal tolerance during pregnancy. Regulates the effector functions of terminally differentiated cytotoxic lymphocyte subsets, and in particular may play a role in adaptive NK cell response to viral infection. Upon MHC-E-peptide binding, transmits intracellular signals via the adapter protein TYROBP/DAP12, triggering the phosphorylation of proximal signaling molecules and cell activation. The chain is Natural killer cells antigen CD94 (KLRD1) from Pongo pygmaeus (Bornean orangutan).